We begin with the raw amino-acid sequence, 161 residues long: Ribonuclease H (161 aa).

An RNase H type-1 domain is found at 5–149 (EKLAIAAATD…VDAIAVAFSK (145 aa)). 4 residues coordinate Mg(2+): aspartate 14, glutamate 53, aspartate 78, and aspartate 141.

It belongs to the RNase H family. Monomer. Mg(2+) serves as cofactor.

The protein resides in the cytoplasm. It carries out the reaction Endonucleolytic cleavage to 5'-phosphomonoester.. In terms of biological role, endonuclease that specifically degrades the RNA of RNA-DNA hybrids. The sequence is that of Ribonuclease H from Prochlorococcus marinus (strain NATL2A).